We begin with the raw amino-acid sequence, 205 residues long: Dihydrofolate reductase (205 aa).

Positions 1–201 constitute a DHFR domain; that stretch reads MLALVVALAS…TSFKMFLYTK (201 aa). NADP(+) is bound by residues alanine 7 and 13–19; that span reads GIGNANA. Residue 29–34 participates in substrate binding; it reads DMAWFR. 62–64 is a binding site for NADP(+); the sequence is RRT. Residue arginine 78 participates in substrate binding. NADP(+) is bound by residues 84-86 and 118-125; these read SRG and GGRDVYSL.

Belongs to the dihydrofolate reductase family.

It catalyses the reaction (6S)-5,6,7,8-tetrahydrofolate + NADP(+) = 7,8-dihydrofolate + NADPH + H(+). The protein operates within cofactor biosynthesis; tetrahydrofolate biosynthesis; 5,6,7,8-tetrahydrofolate from 7,8-dihydrofolate: step 1/1. Its function is as follows. Key enzyme in folate metabolism. Catalyzes an essential reaction for de novo glycine and purine synthesis, and for DNA precursor synthesis. This Encephalitozoon cuniculi (strain GB-M1) (Microsporidian parasite) protein is Dihydrofolate reductase (DHFR-1).